The following is a 211-amino-acid chain: Mitotic spindle assembly checkpoint protein MAD2B (211 aa).

An HORMA domain is found at glutamine 13–valine 203.

In terms of assembly, homooligomer. Interacts with REV1. Interacts with FZR1 (in complex with the anaphase promoting complex APC). May interact with CDC20. Heterodimer with REV3L. This dimer forms the minimal DNA polymerase zeta complex (Pol-zeta2), with REV3L bearing DNA polymerase catalytic activity, although its activity is very low in this context. Component of the tetrameric Pol-zeta complex (Pol-zeta4), which consists of REV3L, MAD2L2, POLD2 and POLD3; Pol-zeta4 is the fully active form of DNA polymerase zeta. Component of the shieldin complex, consisting of SHLD1, SHLD2, SHLD3 and MAD2L2/REV7. Within the complex, SHLD2 forms a scaffold which interacts with a SHLD3-MAD2L2 subcomplex via its N-terminus, and with SHLD1 via its C-terminus.

Its subcellular location is the nucleus. The protein resides in the cytoplasm. The protein localises to the cytoskeleton. It localises to the spindle. It is found in the chromosome. In terms of biological role, adapter protein able to interact with different proteins and involved in different biological processes. Mediates the interaction between the error-prone DNA polymerase zeta catalytic subunit REV3L and the inserter polymerase REV1, thereby mediating the second polymerase switching in translesion DNA synthesis. Translesion DNA synthesis releases the replication blockade of replicative polymerases, stalled in presence of DNA lesions. May also play a role in signal transduction in response to DNA damage. May regulate the activation of the anaphase promoting complex APC thereby regulating progression through the cell cycle. Component of the shieldin complex, which plays an important role in repair of DNA double-stranded breaks (DSBs). During G1 and S phase of the cell cycle, the complex functions downstream of TP53BP1 to promote non-homologous end joining (NHEJ) and suppress DNA end resection. Through transcriptional regulation may play a role in epithelial-mesenchymal transdifferentiation. This chain is Mitotic spindle assembly checkpoint protein MAD2B (MAD2L2), found in Gallus gallus (Chicken).